The following is a 365-amino-acid chain: Eukaryotic translation initiation factor 3 subunit H (365 aa).

The 150-residue stretch at 11–160 (VKVDALVVMK…LRAFRLSSKF (150 aa)) folds into the MPN domain.

It belongs to the eIF-3 subunit H family. In terms of assembly, component of the eukaryotic translation initiation factor 3 (eIF-3) complex.

Its subcellular location is the cytoplasm. Its function is as follows. Component of the eukaryotic translation initiation factor 3 (eIF-3) complex, which is involved in protein synthesis of a specialized repertoire of mRNAs and, together with other initiation factors, stimulates binding of mRNA and methionyl-tRNAi to the 40S ribosome. The eIF-3 complex specifically targets and initiates translation of a subset of mRNAs involved in cell proliferation. This is Eukaryotic translation initiation factor 3 subunit H from Aspergillus oryzae (strain ATCC 42149 / RIB 40) (Yellow koji mold).